The sequence spans 442 residues: Serine--tRNA ligase (442 aa).

Position 244–246 (244–246) interacts with L-serine; that stretch reads TAE. 275–277 provides a ligand contact to ATP; that stretch reads RAE. Glu298 serves as a coordination point for L-serine. 365 to 368 contributes to the ATP binding site; it reads EISS. L-serine is bound at residue Ser400.

Belongs to the class-II aminoacyl-tRNA synthetase family. Type-1 seryl-tRNA synthetase subfamily. Homodimer. The tRNA molecule binds across the dimer.

The protein resides in the cytoplasm. It catalyses the reaction tRNA(Ser) + L-serine + ATP = L-seryl-tRNA(Ser) + AMP + diphosphate + H(+). The catalysed reaction is tRNA(Sec) + L-serine + ATP = L-seryl-tRNA(Sec) + AMP + diphosphate + H(+). It functions in the pathway aminoacyl-tRNA biosynthesis; selenocysteinyl-tRNA(Sec) biosynthesis; L-seryl-tRNA(Sec) from L-serine and tRNA(Sec): step 1/1. Catalyzes the attachment of serine to tRNA(Ser). Is also able to aminoacylate tRNA(Sec) with serine, to form the misacylated tRNA L-seryl-tRNA(Sec), which will be further converted into selenocysteinyl-tRNA(Sec). This chain is Serine--tRNA ligase, found in Bradyrhizobium sp. (strain BTAi1 / ATCC BAA-1182).